Reading from the N-terminus, the 472-residue chain is Methanethiol oxidase (472 aa).

A2 carries the post-translational modification N-acetylalanine. A phosphoserine mark is found at S111, S371, and S467.

This sequence belongs to the selenium-binding protein family. Interacts with USP33. The N-terminus is blocked.

It localises to the nucleus. The protein resides in the cytoplasm. The protein localises to the cytosol. It is found in the membrane. It catalyses the reaction methanethiol + O2 + H2O = hydrogen sulfide + formaldehyde + H2O2 + H(+). It functions in the pathway organosulfur degradation. In terms of biological role, catalyzes the oxidation of methanethiol, an organosulfur compound known to be produced in substantial amounts by gut bacteria. Selenium-binding protein which may be involved in the sensing of reactive xenobiotics in the cytoplasm. May be involved in intra-Golgi protein transport. The protein is Methanethiol oxidase (SELENBP1) of Pongo abelii (Sumatran orangutan).